The sequence spans 207 residues: Antitermination protein Q (207 aa).

Residues 1 to 28 are disordered; the sequence is MRLESVAKFHSPKSPMMSDSPRATASDS. Zn(2+) is bound by residues Cys-118, Cys-121, Cys-144, and Cys-147. A zinc finger lies at 118–147; that stretch reads CRNCHGTGRAVDIAKTEQWGRVVEKECGRC. The DNA-binding element occupies 171–192; the sequence is LTQPTWSRTVKPLYDALVVQCH.

It belongs to the phage antitermination Q type 2 family. As to quaternary structure, interacts with host RPOB (via flap domain); this interaction renders host RNAP resistant to transcription pausing and allows it to read through termination signals. Interacts with host RNA polymerase sigma factor RPOD (via domain-4). Interacts with host NusA (via N-terminus and AR2 domain); this interaction releases the autoinhibition of NusA.

Mediates the switch from middle to viral late gene expression by associating with host RNA polymerase (RNAP) so that the latter can read without pausing and through transcription terminators preceding late genes. Competes with host factor sigma 70 for binding to RPOB, the beta-subunit of host RNAP. To join the elongation complex, binds a specific DNA Q-binding element (QBE) and interacts with RNAP that is paused during early elongation. Participates in the lysis-lysogeny decision by activating the expression of the late lytic genes. The chain is Antitermination protein Q (23) from Salmonella typhimurium.